A 202-amino-acid polypeptide reads, in one-letter code: Cytochrome c oxidase assembly protein CtaG (202 aa).

Residues 1-14 lie on the Cytoplasmic side of the membrane; that stretch reads MSDKAAAPRKQGRN. The chain crosses the membrane as a helical; Signal-anchor for type II membrane protein span at residues 15 to 37; the sequence is NGAVVMMCLSFVFGMGAMSYAAV. Topologically, residues 38-202 are periplasmic; sequence PLYRIFCQVT…GGTVKIEKKL (165 aa).

This sequence belongs to the COX11/CtaG family.

Its subcellular location is the cell inner membrane. Functionally, exerts its effect at some terminal stage of cytochrome c oxidase synthesis, probably by being involved in the insertion of the copper B into subunit I. This chain is Cytochrome c oxidase assembly protein CtaG, found in Rhizobium etli (strain ATCC 51251 / DSM 11541 / JCM 21823 / NBRC 15573 / CFN 42).